Consider the following 1758-residue polypeptide: Condensin-2 complex subunit hcp-6 (1758 aa).

4 disordered regions span residues 428 to 501 (DPGA…KAKE), 969 to 1008 (ENGS…KGGM), 1379 to 1460 (QKRL…ARLL), and 1500 to 1656 (SKQA…LSRG). The span at 438 to 462 (EQNEEEDEEEEGEDEEEEEENEQDD) shows a compositional bias: acidic residues. Over residues 463 to 473 (VAVKEEEQSDK) the composition is skewed to basic and acidic residues. Acidic residues predominate over residues 474–484 (SDEENDGDNEE). Positions 485-501 (NVSKKKEEKKKEKKAKE) are enriched in basic and acidic residues. Polar residues predominate over residues 969 to 979 (ENGSSDASTVN). Over residues 999–1008 (SSQKSSKGGM) the composition is skewed to low complexity. Residues 1326 to 1385 (CIEHKNDIDEILQDNRQLKDEMMFELQRVKQRTEEANRILDEYLKRVAEFKKQQKRLSKS) adopt a coiled-coil conformation. Residues 1414–1423 (EDQENVEEEV) are compositionally biased toward acidic residues. Basic and acidic residues-rich tracts occupy residues 1424–1437 (EMRT…DADV) and 1500–1512 (SKQA…KTIV). Polar residues-rich tracts occupy residues 1602–1618 (ISAN…QSTE) and 1640–1651 (VPTSSSGNTEND).

In terms of assembly, component of the condensin-2 complex.

It is found in the nucleus. The protein localises to the chromosome. It localises to the centromere. In terms of biological role, chromosomal protein which is recruited to mitotic chromosomes by hcp-3 (CENP-A) and hcp-4 (CENP-C). Involved in chromosome segregation during mitosis, playing a role in chromosome condensation and in maintaining chromosome morphology, rigidity and orientation during mitosis. This is Condensin-2 complex subunit hcp-6 from Caenorhabditis elegans.